The sequence spans 248 residues: Protein G1-like6 (248 aa).

Residues 1-15 (MDRHHHHHHHHHHHM) show a composition bias toward basic residues. Disordered regions lie at residues 1 to 35 (MDRH…GATQ), 50 to 84 (GAGS…YESQ), and 198 to 248 (ARGI…FIIP). The segment covering 17 to 32 (SGGGQDPAAGDGGAGG) has biased composition (gly residues). Residues 50-59 (GAGSSSSGAG) are compositionally biased toward low complexity. Residues 60-69 (TSAGGGGGGP) are compositionally biased toward gly residues. Over residues 70–79 (SPSSSSPSLS) the composition is skewed to low complexity. An ALOG domain is found at 80 to 207 (RYESQKRRDW…ARGISYEKKK (128 aa)). The Nuclear localization signal motif lies at 205 to 209 (KKKRK). 2 stretches are compositionally biased toward low complexity: residues 212 to 224 (SSAG…SSEG) and 239 to 248 (TSASPQFIIP).

It belongs to the plant homeotic and developmental regulators ALOG protein family.

The protein resides in the nucleus. Its function is as follows. Probable transcription regulator that acts as a developmental regulator by promoting cell growth in response to light. The sequence is that of Protein G1-like6 from Oryza sativa subsp. indica (Rice).